The following is a 160-amino-acid chain: MLRQLKLTLNISRWIFMPWQRQASASSSQVPPFLAPISDDVIVDYEDPDYLPLPEYPVRPNEPLETRKQRLLYQSRKRGMLENDLLLSTFAAKYLKDFSAEQTAIYDQLINGVSNDWDIYYWATEVKPTPEEYNTEIMKLLKEHVKNAERVTRFRQPDLT.

Residues Met-1–Val-30 constitute a mitochondrion transit peptide.

Belongs to the SDHAF2 family. As to quaternary structure, interacts with the flavoprotein subunit within the SDH catalytic dimer.

It localises to the mitochondrion matrix. Plays an essential role in the assembly of succinate dehydrogenase (SDH), an enzyme complex (also referred to as respiratory complex II) that is a component of both the tricarboxylic acid (TCA) cycle and the mitochondrial electron transport chain, and which couples the oxidation of succinate to fumarate with the reduction of ubiquinone (coenzyme Q) to ubiquinol. Required for flavinylation (covalent attachment of FAD) of the flavoprotein subunit of the SDH catalytic dimer. The polypeptide is Succinate dehydrogenase assembly factor 2-A, mitochondrial (Drosophila persimilis (Fruit fly)).